Reading from the N-terminus, the 171-residue chain is Shikimate kinase (171 aa).

ATP is bound at residue 14-19 (GAGKST). Ser18 serves as a coordination point for Mg(2+). The substrate site is built by Asp36, Arg60, and Gly82. Residue Arg120 participates in ATP binding. A substrate-binding site is contributed by Arg139. Gln156 contributes to the ATP binding site.

This sequence belongs to the shikimate kinase family. Monomer. Mg(2+) serves as cofactor.

It localises to the cytoplasm. The enzyme catalyses shikimate + ATP = 3-phosphoshikimate + ADP + H(+). Its pathway is metabolic intermediate biosynthesis; chorismate biosynthesis; chorismate from D-erythrose 4-phosphate and phosphoenolpyruvate: step 5/7. Its function is as follows. Catalyzes the specific phosphorylation of the 3-hydroxyl group of shikimic acid using ATP as a cosubstrate. The sequence is that of Shikimate kinase from Shewanella sediminis (strain HAW-EB3).